Reading from the N-terminus, the 382-residue chain is D-galactonate dehydratase (382 aa).

Aspartate 183 is a Mg(2+) binding site. Catalysis depends on histidine 185, which acts as the Proton donor. Mg(2+) is bound by residues glutamate 209 and glutamate 235. The Proton acceptor role is filled by histidine 285.

This sequence belongs to the mandelate racemase/muconate lactonizing enzyme family. GalD subfamily. Mg(2+) serves as cofactor.

It catalyses the reaction D-galactonate = 2-dehydro-3-deoxy-D-galactonate + H2O. Its pathway is carbohydrate acid metabolism; D-galactonate degradation; D-glyceraldehyde 3-phosphate and pyruvate from D-galactonate: step 1/3. Catalyzes the dehydration of D-galactonate to 2-keto-3-deoxy-D-galactonate. The sequence is that of D-galactonate dehydratase from Salmonella gallinarum (strain 287/91 / NCTC 13346).